Reading from the N-terminus, the 153-residue chain is MPLLLSGKEFRDDLESACCLAIQTPLEGGAETRLLRRLKAAGYRTQITSVRGFGDPEVFLLKLHGIRPPHLGHQNIGRNGALGEVQEVIPQLHELLSEEQPLALWLLEGQVLSRSELLALCDLSEKDPQLKIVVEMGGERKLKWQSMRKFLEQ.

Belongs to the complex I NdhN subunit family. NDH-1 can be composed of about 15 different subunits; different subcomplexes with different compositions have been identified which probably have different functions.

It localises to the cellular thylakoid membrane. The catalysed reaction is a plastoquinone + NADH + (n+1) H(+)(in) = a plastoquinol + NAD(+) + n H(+)(out). It carries out the reaction a plastoquinone + NADPH + (n+1) H(+)(in) = a plastoquinol + NADP(+) + n H(+)(out). NDH-1 shuttles electrons from an unknown electron donor, via FMN and iron-sulfur (Fe-S) centers, to quinones in the respiratory and/or the photosynthetic chain. The immediate electron acceptor for the enzyme in this species is believed to be plastoquinone. Couples the redox reaction to proton translocation, and thus conserves the redox energy in a proton gradient. Cyanobacterial NDH-1 also plays a role in inorganic carbon-concentration. This is NAD(P)H-quinone oxidoreductase subunit N from Prochlorococcus marinus (strain MIT 9211).